The sequence spans 486 residues: Protein nucleotidyltransferase YdiU (486 aa).

8 residues coordinate ATP: G90, G92, R93, K113, D125, G126, R176, and R183. The active-site Proton acceptor is D252. Residues N253 and D262 each contribute to the Mg(2+) site. D262 serves as a coordination point for ATP.

This sequence belongs to the SELO family. Requires Mg(2+) as cofactor. It depends on Mn(2+) as a cofactor.

The catalysed reaction is L-seryl-[protein] + ATP = 3-O-(5'-adenylyl)-L-seryl-[protein] + diphosphate. It carries out the reaction L-threonyl-[protein] + ATP = 3-O-(5'-adenylyl)-L-threonyl-[protein] + diphosphate. It catalyses the reaction L-tyrosyl-[protein] + ATP = O-(5'-adenylyl)-L-tyrosyl-[protein] + diphosphate. The enzyme catalyses L-histidyl-[protein] + UTP = N(tele)-(5'-uridylyl)-L-histidyl-[protein] + diphosphate. The catalysed reaction is L-seryl-[protein] + UTP = O-(5'-uridylyl)-L-seryl-[protein] + diphosphate. It carries out the reaction L-tyrosyl-[protein] + UTP = O-(5'-uridylyl)-L-tyrosyl-[protein] + diphosphate. Nucleotidyltransferase involved in the post-translational modification of proteins. It can catalyze the addition of adenosine monophosphate (AMP) or uridine monophosphate (UMP) to a protein, resulting in modifications known as AMPylation and UMPylation. This Pseudomonas aeruginosa (strain LESB58) protein is Protein nucleotidyltransferase YdiU.